A 160-amino-acid chain; its full sequence is Nucleotide-binding protein VP1617 (160 aa).

This sequence belongs to the YajQ family.

Functionally, nucleotide-binding protein. In Vibrio parahaemolyticus serotype O3:K6 (strain RIMD 2210633), this protein is Nucleotide-binding protein VP1617.